The primary structure comprises 221 residues: Eukaryotic translation initiation factor 3 subunit K (221 aa).

In terms of domain architecture, PCI spans 46 to 207 (YDLEANLACL…NIKTKHITEK (162 aa)).

It belongs to the eIF-3 subunit K family. As to quaternary structure, component of the eukaryotic translation initiation factor 3 (eIF-3) complex.

It localises to the cytoplasm. In terms of biological role, component of the eukaryotic translation initiation factor 3 (eIF-3) complex, which is involved in protein synthesis of a specialized repertoire of mRNAs and, together with other initiation factors, stimulates binding of mRNA and methionyl-tRNAi to the 40S ribosome. The eIF-3 complex specifically targets and initiates translation of a subset of mRNAs involved in cell proliferation. This is Eukaryotic translation initiation factor 3 subunit K from Aedes aegypti (Yellowfever mosquito).